We begin with the raw amino-acid sequence, 1240 residues long: MFCAAGGPASPGGKPAARAASGFFAPHNPRGATQTAPPPCRRQNFYNPHLAQTGTQPKALGPAQRHTYYSECDEFRFIAPRSLDEDAPAEQRTGVHDGRLRRAPKVYCGGDERDVLRVGPEGFWPRRLRLWGGADHAPEGFDPTVTVFHVYDILEHVEHAYSMRAAQLHERFMDAITPAGTVITLLGLTPEGHRVAVHVYGTRQYFYMNKAEVDRHLQCRAPRDLCERLAAALRESPGASFRGISADHFEAEVVERADVYYYETRPTLYYRVFVRSGRALAYLCDNFCPAIRKYEGGVDATTRFILDNPGFVTFGWYRLKPGRGNAPAQPRPPTAFGTSSDVEFNCTADNLAVEGAMCDLPAYKLMCFDIECKAGGEDELAFPVAERPEDLVIQISCLLYDLSTTALEHILLFSLGSCDLPESHLSDLASRGLPAPVVLEFDSEFEMLLAFMTFVKQYGPEFVTGYNIINFDWPFVLTKLTEIYKVPLDGYGRMNGRGVFRVWDIGQSHFQKRSKIKVNGMVNIDMYGIITDKVKLSSYKLNAVAEAVLKDKKKDLSYRDIPAYYASGPAQRGVIGEYCVQDSLLVGQLFFKFLPHLELSAVARLAGINITRTIYDGQQIRVFTCLLRLAGQKGFILPDTQGRFRGLDKEAPKRPAVPRGEGERPGDGNGDEDKDDDEDGDEDGDEREEVARETGGRHVGYQGARVLDPTSGFHVDPVVVFDFASLYPSIIQAHNLCFSTLSLRPEAVAHLEADRDYLEIEVGGRRLFFVKAHVRESLLSILLRDWLAMRKQIRSRIPQSTPEEAVLLDKQQAAIKVVCNSVYGFTGVQHGLLPCLHVAATVTTIGREMLLATRAYVHARWAEFDQLLADFPEAAGMRAPGPYSMRIIYGDTDSIFVLCRGLTAAGLVAMGDKMASHISRALFLPPIKLECEKTFTKLLLIAKKKYIGVICGGKMLIKGVDLVRKNNCAFINRTSRALVDLLFYDDTVSGAAAALAERPAEEWLARPLPEGLQAFGAVLVDAHRRITDPERDIQDFVLTAELSRHPRAYTNKRLAHLTVYYKLMARRAQVPSIKDRIPYVIVAQTREVEETVARLAALRELDAAAPGDEPAPPAALPSPAKRPRETPSHADPPGGASKPRKLLVSELAEDPGYAIARGVPLNTDYYFSHLLGAACVTFKALFGNNAKITESLLKRFIPETWHPPDDVAARLRAAGFGPAGAGATAEETRRMLHRAFDTLA.

The span at 1–22 shows a compositional bias: low complexity; it reads MFCAAGGPASPGGKPAARAASG. Disordered stretches follow at residues 1 to 44, 646 to 695, and 1103 to 1139; these read MFCA…RRQN, GLDK…RETG, and AAAPGDEPAPPAALPSPAKRPRETPSHADPPGGASKP. Positions 669-688 are enriched in acidic residues; sequence NGDEDKDDDEDGDEDGDERE.

Belongs to the DNA polymerase type-B family. Forms a complex with the ssDNA-binding protein UL29, the DNA polymerase processivity factor, and the alkaline exonuclease. Interacts with the putative helicase-primase complex subunit UL8; this interaction may coordinate leading and lagging strand DNA synthesis at the replication fork.

The protein resides in the host nucleus. It carries out the reaction DNA(n) + a 2'-deoxyribonucleoside 5'-triphosphate = DNA(n+1) + diphosphate. The catalysed reaction is Endonucleolytic cleavage to 5'-phosphomonoester.. Replicates viral genomic DNA. The replication complex is composed of six viral proteins: the DNA polymerase, processivity factor, primase, primase-associated factor, helicase, and ssDNA-binding protein. Additionally, the polymerase contains an intrinsic ribonuclease H (RNase H) activity that specifically degrades RNA/DNA heteroduplexes or duplex DNA substrates in the 5' to 3' direction. Therefore, it can catalyze the excision of the RNA primers that initiate the synthesis of Okazaki fragments at a replication fork during viral DNA replication. The protein is DNA polymerase catalytic subunit of Human herpesvirus 2 (strain HG52) (HHV-2).